A 613-amino-acid polypeptide reads, in one-letter code: Proline--tRNA ligase (613 aa).

This sequence belongs to the class-II aminoacyl-tRNA synthetase family. ProS type 1 subfamily. As to quaternary structure, homodimer.

The protein localises to the cytoplasm. The enzyme catalyses tRNA(Pro) + L-proline + ATP = L-prolyl-tRNA(Pro) + AMP + diphosphate. Catalyzes the attachment of proline to tRNA(Pro) in a two-step reaction: proline is first activated by ATP to form Pro-AMP and then transferred to the acceptor end of tRNA(Pro). As ProRS can inadvertently accommodate and process non-cognate amino acids such as alanine and cysteine, to avoid such errors it has two additional distinct editing activities against alanine. One activity is designated as 'pretransfer' editing and involves the tRNA(Pro)-independent hydrolysis of activated Ala-AMP. The other activity is designated 'posttransfer' editing and involves deacylation of mischarged Ala-tRNA(Pro). The misacylated Cys-tRNA(Pro) is not edited by ProRS. This Tropheryma whipplei (strain Twist) (Whipple's bacillus) protein is Proline--tRNA ligase.